The following is a 197-amino-acid chain: dITP/XTP pyrophosphatase (197 aa).

Residue 8 to 13 coordinates substrate; sequence TGNAGK. The Mg(2+) site is built by Glu-40 and Asp-69. Asp-69 serves as the catalytic Proton acceptor. Substrate is bound by residues Ser-70, 154-157, Lys-177, and 182-183; these read FGYD and HR.

This sequence belongs to the HAM1 NTPase family. As to quaternary structure, homodimer. It depends on Mg(2+) as a cofactor.

It carries out the reaction XTP + H2O = XMP + diphosphate + H(+). The enzyme catalyses dITP + H2O = dIMP + diphosphate + H(+). It catalyses the reaction ITP + H2O = IMP + diphosphate + H(+). Pyrophosphatase that catalyzes the hydrolysis of nucleoside triphosphates to their monophosphate derivatives, with a high preference for the non-canonical purine nucleotides XTP (xanthosine triphosphate), dITP (deoxyinosine triphosphate) and ITP. Seems to function as a house-cleaning enzyme that removes non-canonical purine nucleotides from the nucleotide pool, thus preventing their incorporation into DNA/RNA and avoiding chromosomal lesions. In Salmonella paratyphi A (strain ATCC 9150 / SARB42), this protein is dITP/XTP pyrophosphatase (rdgB).